We begin with the raw amino-acid sequence, 342 residues long: tRNA N6-adenosine threonylcarbamoyltransferase (342 aa).

Fe cation contacts are provided by His-111 and His-115. Residues 134–138 (LVSGG), Asp-167, Gly-180, and Asn-272 each bind substrate. Fe cation is bound at residue Asp-300.

It belongs to the KAE1 / TsaD family. The cofactor is Fe(2+).

It is found in the cytoplasm. The catalysed reaction is L-threonylcarbamoyladenylate + adenosine(37) in tRNA = N(6)-L-threonylcarbamoyladenosine(37) in tRNA + AMP + H(+). Its function is as follows. Required for the formation of a threonylcarbamoyl group on adenosine at position 37 (t(6)A37) in tRNAs that read codons beginning with adenine. Is involved in the transfer of the threonylcarbamoyl moiety of threonylcarbamoyl-AMP (TC-AMP) to the N6 group of A37, together with TsaE and TsaB. TsaD likely plays a direct catalytic role in this reaction. The chain is tRNA N6-adenosine threonylcarbamoyltransferase from Aromatoleum aromaticum (strain DSM 19018 / LMG 30748 / EbN1) (Azoarcus sp. (strain EbN1)).